The following is a 208-amino-acid chain: Guanylate kinase (208 aa).

Residues 8–187 (GVCLVISAPS…AISQARSVLT (180 aa)) enclose the Guanylate kinase-like domain. 15-22 (APSGAGKS) lines the ATP pocket.

This sequence belongs to the guanylate kinase family.

It localises to the cytoplasm. The catalysed reaction is GMP + ATP = GDP + ADP. Its function is as follows. Essential for recycling GMP and indirectly, cGMP. This chain is Guanylate kinase, found in Gluconobacter oxydans (strain 621H) (Gluconobacter suboxydans).